A 976-amino-acid chain; its full sequence is Vacuolar membrane protease (976 aa).

Over 1-51 (MPLSTGLTLSSLNVMEKADNHYNMMTKQPPALSPVDMVSSRRGFNPIAFTP) the chain is Cytoplasmic. Residues 52–72 (WPVTILSSLVYLAFIIPIIVV) form a helical membrane-spanning segment. Over 73–399 (HHLVPPAPKE…DNGNDGKLNN (327 aa)) the chain is Vacuolar. Asparagine 147 and asparagine 150 each carry an N-linked (GlcNAc...) asparagine glycan. Positions 206 and 218 each coordinate Zn(2+). Glutamate 252 acts as the Proton acceptor in catalysis. Zn(2+)-binding residues include glutamate 253, glutamate 278, and histidine 351. Residues 400–420 (GAGTLGVWFDFYGSSFAVFEL) form a helical membrane-spanning segment. Residues 421–427 (NTLFGHS) lie on the Cytoplasmic side of the membrane. Residues 428-448 (VALLVVAPLLLIATCVTLYTL) form a helical membrane-spanning segment. The Vacuolar segment spans residues 449–477 (DKMYMFSMYTYLSESGGQVSLYGLRGLFR). Residues 478 to 498 (FPLILGISTALTIGLAFLLMK) form a helical membrane-spanning segment. Residues 499 to 519 (ANPFIIYSSPYAVWNPSALHR) are Cytoplasmic-facing. A helical transmembrane segment spans residues 520 to 540 (AYAFTWMFGMMWVLLVIATVY). The Vacuolar portion of the chain corresponds to 541-550 (QKQHGIASSY). Residues 551–571 (FIVFYFAGVSIATWISYLELF) traverse the membrane as a helical segment. Residues 572 to 675 (GLPTTQDYAR…HRLEQRWSIN (104 aa)) lie on the Cytoplasmic side of the membrane. The segment at 590 to 633 (TPSSDSRLLAPSADELPPSGSAAGHDFNPEDVEDEEPTESTSLL) is disordered. Positions 618–627 (PEDVEDEEPT) are enriched in acidic residues. Residues 676 to 696 (LISSAWILQFLFVAPIVIILL) traverse the membrane as a helical segment. Topologically, residues 697 to 718 (GQLGLFLTSATYQIGADGGSQL) are vacuolar. Residues 719 to 739 (VIYVGIAVLSVLILLPLFPFI) traverse the membrane as a helical segment. The Cytoplasmic portion of the chain corresponds to 740 to 745 (HRFTYH). Residues 746 to 766 (IPTFLLFVLIGTLVYNLTAFP) form a helical membrane-spanning segment. At 767 to 976 (FSHSNRLKVA…LVEGSHSFKL (210 aa)) the chain is on the vacuolar side. Asparagine 848 carries N-linked (GlcNAc...) asparagine glycosylation.

It belongs to the peptidase M28 family. Zn(2+) is required as a cofactor.

Its subcellular location is the vacuole membrane. May be involved in vacuolar sorting and osmoregulation. This chain is Vacuolar membrane protease, found in Arthroderma otae (strain ATCC MYA-4605 / CBS 113480) (Microsporum canis).